The following is an 891-amino-acid chain: Alanine--tRNA ligase (891 aa).

Residues histidine 564, histidine 568, cysteine 678, and histidine 682 each coordinate Zn(2+).

It belongs to the class-II aminoacyl-tRNA synthetase family. Zn(2+) serves as cofactor.

Its subcellular location is the cytoplasm. It catalyses the reaction tRNA(Ala) + L-alanine + ATP = L-alanyl-tRNA(Ala) + AMP + diphosphate. Its function is as follows. Catalyzes the attachment of alanine to tRNA(Ala) in a two-step reaction: alanine is first activated by ATP to form Ala-AMP and then transferred to the acceptor end of tRNA(Ala). Also edits incorrectly charged Ser-tRNA(Ala) and Gly-tRNA(Ala) via its editing domain. The sequence is that of Alanine--tRNA ligase from Nitrobacter winogradskyi (strain ATCC 25391 / DSM 10237 / CIP 104748 / NCIMB 11846 / Nb-255).